A 264-amino-acid chain; its full sequence is MNRSTISPVEARQQFRAGLIQPTSGWSAGFAQANLISMPQDLAYDFLLFAQRNPKPCPILEVLNAGETFGGIFGSNATEADIRTDAPQYRIYAHGELIDSPASAVDYWRDDLVSFIIGCSFTFEHPMVQAGVPVRHLEAGRNVPMYETSLACRPAGSLSGNLVVSLRMIPASQVADAVRITSRYPAVHGAPVHIGDPSLIGIDDINNPDFGDAPLSEPSDVPVFWACGVTPQAMVMSSKPPLAITHAPGHMLITDAPDLGFQVP.

Belongs to the D-glutamate cyclase family.

The chain is Putative hydro-lyase Cgl2544/cg2803 from Corynebacterium glutamicum (strain ATCC 13032 / DSM 20300 / JCM 1318 / BCRC 11384 / CCUG 27702 / LMG 3730 / NBRC 12168 / NCIMB 10025 / NRRL B-2784 / 534).